The sequence spans 346 residues: Nicotinate-nucleotide--dimethylbenzimidazole phosphoribosyltransferase (346 aa).

Glu-313 serves as the catalytic Proton acceptor.

The protein belongs to the CobT family.

It catalyses the reaction 5,6-dimethylbenzimidazole + nicotinate beta-D-ribonucleotide = alpha-ribazole 5'-phosphate + nicotinate + H(+). Its pathway is nucleoside biosynthesis; alpha-ribazole biosynthesis; alpha-ribazole from 5,6-dimethylbenzimidazole: step 1/2. In terms of biological role, catalyzes the synthesis of alpha-ribazole-5'-phosphate from nicotinate mononucleotide (NAMN) and 5,6-dimethylbenzimidazole (DMB). This is Nicotinate-nucleotide--dimethylbenzimidazole phosphoribosyltransferase from Parabacteroides distasonis (strain ATCC 8503 / DSM 20701 / CIP 104284 / JCM 5825 / NCTC 11152).